The chain runs to 1061 residues: Eukaryotic translation initiation factor 3 subunit A (1061 aa).

Polar residues predominate over residues 114 to 126; the sequence is QSSIEATTGSSSV. The disordered stretch occupies residues 114-133; sequence QSSIEATTGSSSVEDLEASE. A PCI domain is found at 339 to 523; it reads LQKAATFVVL…GVLSFDVDVF (185 aa). 2 coiled-coil regions span residues 609–724 and 789–906; these read EVIQ…KRLD and RADL…AAAA. Residues 828-901 show a composition bias toward basic and acidic residues; sequence REKREREEKE…EAMARRRAEK (74 aa). The interval 828–1061 is disordered; that stretch reads REKREREEKE…KYVPKFRREG (234 aa). Composition is skewed to pro residues over residues 950-962 and 1000-1011; these read SGPP…PPPI and APPPERSGPPPR.

The protein belongs to the eIF-3 subunit A family. In terms of assembly, component of the eukaryotic translation initiation factor 3 (eIF-3) complex.

The protein resides in the cytoplasm. Functionally, RNA-binding component of the eukaryotic translation initiation factor 3 (eIF-3) complex, which is involved in protein synthesis of a specialized repertoire of mRNAs and, together with other initiation factors, stimulates binding of mRNA and methionyl-tRNAi to the 40S ribosome. The eIF-3 complex specifically targets and initiates translation of a subset of mRNAs involved in cell proliferation. This Chaetomium globosum (strain ATCC 6205 / CBS 148.51 / DSM 1962 / NBRC 6347 / NRRL 1970) (Soil fungus) protein is Eukaryotic translation initiation factor 3 subunit A.